Reading from the N-terminus, the 560-residue chain is DNA ligase B (560 aa).

Lysine 124 (N6-AMP-lysine intermediate) is an active-site residue.

The protein belongs to the NAD-dependent DNA ligase family. LigB subfamily.

It catalyses the reaction NAD(+) + (deoxyribonucleotide)n-3'-hydroxyl + 5'-phospho-(deoxyribonucleotide)m = (deoxyribonucleotide)n+m + AMP + beta-nicotinamide D-nucleotide.. In terms of biological role, catalyzes the formation of phosphodiester linkages between 5'-phosphoryl and 3'-hydroxyl groups in double-stranded DNA using NAD as a coenzyme and as the energy source for the reaction. The protein is DNA ligase B of Escherichia coli O9:H4 (strain HS).